Here is a 534-residue protein sequence, read N- to C-terminus: MGSKRKHESGDVEVKKPKHDNEVKGKEKKEKKEKKEKKEKKEKKEKKEKKEKKEKKEKNEKKEKKEKKAKKEKTEETEETDSTVSTVSSSSSGYTQAAELTALPQSEIDEFLQTNEVTVEDPHKLGFRPILSFDHVQLQSKIAPIVTKFPKPTPIQSASWPYLLNGDDVVGVAETGSGKTFAFGVPAINNIITDNKKGLRVLCISPTRELALQIYDNLTMLTKNCGLTCVAIYGGVPKDQQIKAVKTASVVVATPGRLVDLLNDGAVDLSTIDYLVLDEADRMLEKGFEEDIKNIIGCTNKQRQTLMFTATWPKEVRELAATFMNKAVKVSIGNRDELAANKRITQTVEVMDPRDKERRLLQLLRQYGSDQKILVFALYKKEATRVEAMLRRSGFNVAAIHGDLSQQQRTSALDSFKRGDSNLLLATDVAARGLDIPNVKVVINLTFPLTVEDYVHRIGRTGRAGQTGIAHTLFTEHEKHLSGALMNVLRGAGQPVPDELLKFGGHTKKKSHSAYGAFFKDVDMTKTAKKIKFE.

Residues 1–96 (MGSKRKHESG…VSSSSSGYTQ (96 aa)) are disordered. Basic and acidic residues predominate over residues 8–30 (ESGDVEVKKPKHDNEVKGKEKKE). Over residues 31–53 (KKEKKEKKEKKEKKEKKEKKEKK) the composition is skewed to basic residues. Positions 54-63 (EKKEKNEKKE) are enriched in basic and acidic residues. The span at 82 to 92 (STVSTVSSSSS) shows a compositional bias: low complexity. A Q motif motif is present at residues 131–157 (LSFDHVQLQSKIAPIVTKFPKPTPIQS). Positions 160-330 (WPYLLNGDDV…ATFMNKAVKV (171 aa)) constitute a Helicase ATP-binding domain. Residue 173–180 (AETGSGKT) coordinates ATP. A DEAD box motif is present at residues 278–281 (DEAD). The region spanning 359–504 (RLLQLLRQYG…PVPDELLKFG (146 aa)) is the Helicase C-terminal domain.

This sequence belongs to the DEAD box helicase family. DDX5/DBP2 subfamily.

It is found in the nucleus. Its subcellular location is the nucleolus. It carries out the reaction ATP + H2O = ADP + phosphate + H(+). ATP-dependent RNA helicase required for 60S ribosomal subunit synthesis. Involved in efficient pre-rRNA processing, predominantly at site A3, which is necessary for the normal formation of 25S and 5.8S rRNAs. This Meyerozyma guilliermondii (strain ATCC 6260 / CBS 566 / DSM 6381 / JCM 1539 / NBRC 10279 / NRRL Y-324) (Yeast) protein is ATP-dependent RNA helicase DBP3 (DBP3).